The chain runs to 271 residues: 4-hydroxy-tetrahydrodipicolinate reductase (271 aa).

NAD(+)-binding positions include 12-17 and E38; that span reads GGSGRM. R39 lines the NADP(+) pocket. Residues 102–104 and 126–129 contribute to the NAD(+) site; these read GTT and APNM. The Proton donor/acceptor role is filled by H159. H160 is a (S)-2,3,4,5-tetrahydrodipicolinate binding site. Residue K163 is the Proton donor of the active site. 169 to 170 contributes to the (S)-2,3,4,5-tetrahydrodipicolinate binding site; the sequence is GT.

This sequence belongs to the DapB family.

It is found in the cytoplasm. It carries out the reaction (S)-2,3,4,5-tetrahydrodipicolinate + NAD(+) + H2O = (2S,4S)-4-hydroxy-2,3,4,5-tetrahydrodipicolinate + NADH + H(+). The enzyme catalyses (S)-2,3,4,5-tetrahydrodipicolinate + NADP(+) + H2O = (2S,4S)-4-hydroxy-2,3,4,5-tetrahydrodipicolinate + NADPH + H(+). The protein operates within amino-acid biosynthesis; L-lysine biosynthesis via DAP pathway; (S)-tetrahydrodipicolinate from L-aspartate: step 4/4. Catalyzes the conversion of 4-hydroxy-tetrahydrodipicolinate (HTPA) to tetrahydrodipicolinate. This chain is 4-hydroxy-tetrahydrodipicolinate reductase, found in Shewanella sediminis (strain HAW-EB3).